A 262-amino-acid chain; its full sequence is Hemin import ATP-binding protein HmuV (262 aa).

The ABC transporter domain occupies 2 to 241 (IRASDISVRL…ETMEAVFGCR (240 aa)). 34–41 (GPNGSGKT) contributes to the ATP binding site.

Belongs to the ABC transporter superfamily. Heme (hemin) importer (TC 3.A.1.14.5) family. As to quaternary structure, the complex is composed of two ATP-binding proteins (HmuV), two transmembrane proteins (HmuU) and a solute-binding protein (HmuT).

The protein localises to the cell inner membrane. In terms of biological role, part of the ABC transporter complex HmuTUV involved in hemin import. Responsible for energy coupling to the transport system. The polypeptide is Hemin import ATP-binding protein HmuV (Rhizobium meliloti (strain 1021) (Ensifer meliloti)).